The primary structure comprises 503 residues: Transcription termination/antitermination protein NusA (503 aa).

An S1 motif domain is found at 140–206 (GELVIGVVKR…RGPQLLVSRT (67 aa)). Positions 308–374 (SHTMDIAVNK…FMEKLDVDEE (67 aa)) constitute a KH domain.

The protein belongs to the NusA family. In terms of assembly, monomer. Binds directly to the core enzyme of the DNA-dependent RNA polymerase and to nascent RNA.

It localises to the cytoplasm. Its function is as follows. Participates in both transcription termination and antitermination. In Coxiella burnetii (strain RSA 493 / Nine Mile phase I), this protein is Transcription termination/antitermination protein NusA.